A 437-amino-acid chain; its full sequence is Ribosomal protein uS12 methylthiotransferase RimO (437 aa).

The region spanning 4 to 114 is the MTTase N-terminal domain; it reads PRVSFVSLGC…VMAAVHEAAP (111 aa). [4Fe-4S] cluster is bound by residues Cys-13, Cys-49, Cys-78, Cys-145, Cys-149, and Cys-152. The Radical SAM core domain maps to 131–369; sequence LTPRHYAYLK…MQRQQKISAT (239 aa). Positions 372-437 constitute a TRAM domain; that stretch reads AKKVGKRLPV…DAYDLYGSAV (66 aa).

It belongs to the methylthiotransferase family. RimO subfamily. The cofactor is [4Fe-4S] cluster.

The protein resides in the cytoplasm. It carries out the reaction L-aspartate(89)-[ribosomal protein uS12]-hydrogen + (sulfur carrier)-SH + AH2 + 2 S-adenosyl-L-methionine = 3-methylsulfanyl-L-aspartate(89)-[ribosomal protein uS12]-hydrogen + (sulfur carrier)-H + 5'-deoxyadenosine + L-methionine + A + S-adenosyl-L-homocysteine + 2 H(+). Functionally, catalyzes the methylthiolation of an aspartic acid residue of ribosomal protein uS12. This chain is Ribosomal protein uS12 methylthiotransferase RimO, found in Mesorhizobium japonicum (strain LMG 29417 / CECT 9101 / MAFF 303099) (Mesorhizobium loti (strain MAFF 303099)).